A 282-amino-acid chain; its full sequence is Sulfur carrier protein FdhD (282 aa).

The active-site Cysteine persulfide intermediate is Cys-126. Position 265–270 (265–270 (FVRNNR)) interacts with Mo-bis(molybdopterin guanine dinucleotide).

It belongs to the FdhD family.

The protein resides in the cytoplasm. Required for formate dehydrogenase (FDH) activity. Acts as a sulfur carrier protein that transfers sulfur from IscS to the molybdenum cofactor prior to its insertion into FDH. This is Sulfur carrier protein FdhD from Thermoplasma acidophilum (strain ATCC 25905 / DSM 1728 / JCM 9062 / NBRC 15155 / AMRC-C165).